Here is a 161-residue protein sequence, read N- to C-terminus: Small ribosomal subunit protein uS9 (161 aa).

This sequence belongs to the universal ribosomal protein uS9 family.

This chain is Small ribosomal subunit protein uS9, found in Bartonella bacilliformis (strain ATCC 35685 / KC583 / Herrer 020/F12,63).